The chain runs to 106 residues: Phosphoribosyl-ATP pyrophosphatase (106 aa).

The protein belongs to the PRA-PH family.

It localises to the cytoplasm. The enzyme catalyses 1-(5-phospho-beta-D-ribosyl)-ATP + H2O = 1-(5-phospho-beta-D-ribosyl)-5'-AMP + diphosphate + H(+). It participates in amino-acid biosynthesis; L-histidine biosynthesis; L-histidine from 5-phospho-alpha-D-ribose 1-diphosphate: step 2/9. The polypeptide is Phosphoribosyl-ATP pyrophosphatase (Geotalea daltonii (strain DSM 22248 / JCM 15807 / FRC-32) (Geobacter daltonii)).